The following is a 49-amino-acid chain: Large ribosomal subunit protein bL32 (49 aa).

It belongs to the bacterial ribosomal protein bL32 family.

The polypeptide is Large ribosomal subunit protein bL32 (Nitratiruptor sp. (strain SB155-2)).